A 353-amino-acid polypeptide reads, in one-letter code: Pupal cuticle protein PCP52 (353 aa).

Residues 1–15 form the signal peptide; it reads MRVLILSAFIACATA. Residues 166–195 are disordered; sequence AEAPEGNKDEGNKDSVQVESSATESESDKA. A compositionally biased stretch (polar residues) spans 179-189; sequence DSVQVESSATE.

Its function is as follows. Component of the cuticle of the pupa of Galleria mellonella. The sequence is that of Pupal cuticle protein PCP52 (PCP52) from Galleria mellonella (Greater wax moth).